Reading from the N-terminus, the 811-residue chain is Ent-13-epi-manoyl oxide synthase KSL2, chloroplastic (811 aa).

Residues 1–49 constitute a chloroplast transit peptide; it reads MALPLSTCLLFHPKESRSRRFCFSPASAASLKSGLHSATSAKIASMPTC. 4 residues coordinate Mg(2+): D550, D554, N694, and E702. The short motif at 550–554 is the DDXXD motif element; that stretch reads DDFFD.

It belongs to the terpene synthase family. Mg(2+) serves as cofactor.

It is found in the plastid. Its subcellular location is the chloroplast. It carries out the reaction ent-8alpha-hydroxylabd-13-en-15-yl diphosphate = ent-13-epi-manoyl oxide + diphosphate. The protein operates within secondary metabolite biosynthesis; terpenoid biosynthesis. Involved in diterpenoid biosynthesis. Catalyzes the conversion of ent-8alpha-hydroxylabd-13-en-15-yl diphosphate to ent-13-epi-manoyl oxide. This chain is Ent-13-epi-manoyl oxide synthase KSL2, chloroplastic, found in Salvia miltiorrhiza (Chinese sage).